The chain runs to 643 residues: Threonine--tRNA ligase (643 aa).

In terms of domain architecture, TGS spans 1-62 (MSFSVTLPDG…DEDVEAAIIT (62 aa)). A catalytic region spans residues 239–537 (DHRTIGRDLD…LTEIYKGAFP (299 aa)). The Zn(2+) site is built by Cys-333, His-384, and His-514.

It belongs to the class-II aminoacyl-tRNA synthetase family. In terms of assembly, homodimer. Zn(2+) serves as cofactor.

It is found in the cytoplasm. It catalyses the reaction tRNA(Thr) + L-threonine + ATP = L-threonyl-tRNA(Thr) + AMP + diphosphate + H(+). Functionally, catalyzes the attachment of threonine to tRNA(Thr) in a two-step reaction: L-threonine is first activated by ATP to form Thr-AMP and then transferred to the acceptor end of tRNA(Thr). Also edits incorrectly charged L-seryl-tRNA(Thr). This Lactobacillus gasseri (strain ATCC 33323 / DSM 20243 / BCRC 14619 / CIP 102991 / JCM 1131 / KCTC 3163 / NCIMB 11718 / NCTC 13722 / AM63) protein is Threonine--tRNA ligase.